Here is a 377-residue protein sequence, read N- to C-terminus: Succinyl-diaminopimelate desuccinylase (377 aa).

Histidine 66 serves as a coordination point for Zn(2+). Aspartate 68 is an active-site residue. Aspartate 99 is a Zn(2+) binding site. Glutamate 133 functions as the Proton acceptor in the catalytic mechanism. Residues glutamate 134, glutamate 163, and histidine 349 each contribute to the Zn(2+) site.

It belongs to the peptidase M20A family. DapE subfamily. As to quaternary structure, homodimer. Zn(2+) is required as a cofactor. Requires Co(2+) as cofactor.

The catalysed reaction is N-succinyl-(2S,6S)-2,6-diaminopimelate + H2O = (2S,6S)-2,6-diaminopimelate + succinate. Its pathway is amino-acid biosynthesis; L-lysine biosynthesis via DAP pathway; LL-2,6-diaminopimelate from (S)-tetrahydrodipicolinate (succinylase route): step 3/3. Its function is as follows. Catalyzes the hydrolysis of N-succinyl-L,L-diaminopimelic acid (SDAP), forming succinate and LL-2,6-diaminopimelate (DAP), an intermediate involved in the bacterial biosynthesis of lysine and meso-diaminopimelic acid, an essential component of bacterial cell walls. The protein is Succinyl-diaminopimelate desuccinylase of Legionella pneumophila (strain Corby).